Here is a 211-residue protein sequence, read N- to C-terminus: FMN-dependent NADH:quinone oxidoreductase (211 aa).

Residues 17 to 19 (SYS) and 99 to 102 (MWNF) each bind FMN.

The protein belongs to the azoreductase type 1 family. In terms of assembly, homodimer. It depends on FMN as a cofactor.

The enzyme catalyses 2 a quinone + NADH + H(+) = 2 a 1,4-benzosemiquinone + NAD(+). The catalysed reaction is N,N-dimethyl-1,4-phenylenediamine + anthranilate + 2 NAD(+) = 2-(4-dimethylaminophenyl)diazenylbenzoate + 2 NADH + 2 H(+). In terms of biological role, quinone reductase that provides resistance to thiol-specific stress caused by electrophilic quinones. Its function is as follows. Also exhibits azoreductase activity. Catalyzes the reductive cleavage of the azo bond in aromatic azo compounds to the corresponding amines. This is FMN-dependent NADH:quinone oxidoreductase from Exiguobacterium sp. (strain ATCC BAA-1283 / AT1b).